The sequence spans 416 residues: MQITILGSGVIGVTTAYYLAKLGHEVTVIDREEGPALETSFANAGQVSPGYASPWAAPGIPLKAAKWLFQKHAPLILRLTTDPVQYRWLLQMLANCTDSRYKINKTRMVRVAEYSRDCLIELRKDTGIEYDQRSQGTLQLFREQYQLDGIGKDIEVLRQDGVPFEVLDRDGCVNVEPALAHAKDKFVGGLRLPNDETGDCFKFTNALAKIAEGLGVKFRFGVNIKSLLMSGGKISGVETSEGIVTAERYVVALGSYTPALIKALGLNAPIYPVKGYSITAPIVDESRAPVSTVLDESYKIAITRLGDRIRVGGMAEVSGFTDDLPAARRATLDLSVTDLFPGGDLKAATFWSGLRPMTPDSTPIIGGTRYDNLFINAGHGTLGWTMACGSGRLLADLISGNKADIRADDLGIARYN.

Position 3–17 (3–17) interacts with FAD; the sequence is ITILGSGVIGVTTAY.

This sequence belongs to the DadA oxidoreductase family. The cofactor is FAD.

It catalyses the reaction a D-alpha-amino acid + A + H2O = a 2-oxocarboxylate + AH2 + NH4(+). Its pathway is amino-acid degradation; D-alanine degradation; NH(3) and pyruvate from D-alanine: step 1/1. In terms of biological role, oxidative deamination of D-amino acids. This chain is D-amino acid dehydrogenase, found in Brucella abortus (strain S19).